We begin with the raw amino-acid sequence, 330 residues long: MSTNRHQALGLTDQEAVDMYRTMLLARKIDERMWLLNRSGKIPFVISCQGQEAAQVGAAFALDREMDYVLPYYRDMGVVLAFGMTAKDLMMSGFAKAADPNSGGRQMPGHFGQKKNRIVTGSSPVTTQVPHAVGIALAGRMEKKDIAAFVTFGEGSSNQGDFHEGANFAAVHKLPVIFMCENNKYAISVPYDKQVACENISDRAIGYGMPGVTVNGNDPLEVYQAVKEARERARRGEGPTLIETISYRLTPHSSDDDDSSYRGREEVEEAKKSDPLLTYQAYLKETGLLSDEIEQTMLDEIMAIVNEATDEAENAPYAAPESALDYVYAK.

Substrate is bound by residues phenylalanine 44, tyrosine 73, 107 to 110 (MPGH), and serine 123. 72–74 (YYR) is a binding site for thiamine diphosphate. Thiamine diphosphate is bound by residues 123 to 125 (SPV), 153 to 159 (GEGSSNQ), 183 to 187 (NKYAI), and histidine 252. Positions 154, 183, and 185 each coordinate Mg(2+). The interval 249 to 272 (LTPHSSDDDDSSYRGREEVEEAKK) is disordered. Residues 259 to 272 (SSYRGREEVEEAKK) are compositionally biased toward basic and acidic residues.

This sequence belongs to the BCKDHA family. Heterotetramer of two alpha and two beta chains. Directly associated with ODBB in the E1 complex. The cofactor is thiamine diphosphate.

It catalyses the reaction N(6)-[(R)-lipoyl]-L-lysyl-[protein] + 3-methyl-2-oxobutanoate + H(+) = N(6)-[(R)-S(8)-2-methylpropanoyldihydrolipoyl]-L-lysyl-[protein] + CO2. In terms of biological role, the branched-chain alpha-keto dehydrogenase complex catalyzes the overall conversion of alpha-keto acids to acyl-CoA and CO(2). It contains multiple copies of three enzymatic components: branched-chain alpha-keto acid decarboxylase (E1), lipoamide acyltransferase (E2) and lipoamide dehydrogenase (E3). This Bacillus subtilis (strain 168) protein is 2-oxoisovalerate dehydrogenase subunit alpha (bfmBAA).